A 132-amino-acid polypeptide reads, in one-letter code: Rubredoxin-1 (132 aa).

In terms of domain architecture, Rubredoxin-like spans 1–53; the sequence is MSRYQCPDCQYIYDENKGEPHEGFHPNTSWNDIPKDWACPDCAVRDKVDFIFL. The Fe cation site is built by Cys-6, Cys-9, Cys-39, and Cys-42. The interval 108–132 is disordered; sequence TEVLDQASTPQVVRKSSTRKKMRNK. Residues 113–122 are compositionally biased toward polar residues; the sequence is QASTPQVVRK. Positions 123 to 132 are enriched in basic residues; sequence SSTRKKMRNK.

The protein belongs to the rubredoxin family. Requires Fe(3+) as cofactor.

The protein resides in the cytoplasm. It functions in the pathway hydrocarbon metabolism; alkane degradation. Not known. Probably involved in an electron transport pathway, but not required for the hydrocarbon hydroxylating system. Seems to be non-functional. In Ectopseudomonas oleovorans (Pseudomonas oleovorans), this protein is Rubredoxin-1 (alkF).